The primary structure comprises 450 residues: Sulfite exporter TauE/SafE family protein 1 (450 aa).

A run of 12 helical transmembrane segments spans residues 5 to 25 (LVPLLLSLITIFTIFNPSALA), 48 to 68 (TIEVSIPTIIAAVLSFFAASI), 70 to 90 (SAGGIGGGGLFLSIMTIIAGL), 97 to 117 (SFSAFMVTGVSFANVGCNLFL), 130 to 150 (FDLALTIQPCLLLGVSIGVIC), 153 to 173 (MFPNWLVLFLFAVFLAWSTMK), 223 to 243 (FPWMKLGVLVIIWLLFFSINL), 261 to 281 (ALYWFLSSLQIPLTIFFTLCI), 316 to 336 (VMALLAGVLGGLFGIGGGMLI), 340 to 360 (LLQIGIAPEVTAATCSFMVLF), 378 to 398 (GTAAIFALVCFVASLVGLMVV), and 408 to 428 (ASIIVFAVGIVMALSTVLMTT).

Belongs to the 4-toluene sulfonate uptake permease (TSUP) (TC 2.A.102) family.

It localises to the membrane. The protein is Sulfite exporter TauE/SafE family protein 1 of Arabidopsis thaliana (Mouse-ear cress).